The following is a 1324-amino-acid chain: RNA2 polyprotein (1324 aa).

It belongs to the nepoviruses RNA2 polyprotein family. Specific enzymatic cleavages in vivo by the P1 encoded 3C-like protease yield mature proteins. Post-translationally, the N-terminus of the coat protein is blocked.

Its subcellular location is the host cell junction. The protein localises to the host plasmodesma. It is found in the host cytoplasm. It localises to the host nucleus. The protein resides in the virion. Its function is as follows. Implicated in RNA2 replication. Could also be required for nematode transmission of the virus. In terms of biological role, transports viral genome to neighboring plant cells directly through plasmosdesmata, without any budding. The movement protein allows efficient cell to cell propagation, by bypassing the host cell wall barrier. Acts by forming a tubular structure at the host plasmodesmata, enlarging it enough to allow free passage of virion capsids. This is RNA2 polyprotein from Apium graveolens (Celery).